A 3579-amino-acid chain; its full sequence is Protocadherin-like wing polarity protein stan (3579 aa).

The signal sequence occupies residues 1–29 (MQTREFPQRPLGLLLVLLVVLLQSSLIKS). Topologically, residues 30-2816 (YLIIVHEDTP…EPSLLVQITS (2787 aa)) are extracellular. 3 N-linked (GlcNAc...) asparagine glycosylation sites follow: Asn46, Asn179, and Asn340. 8 consecutive Cadherin domains span residues 360-464 (EQAL…SPTF), 465-581 (EAEQ…YPQF), 582-689 (SERT…APRF), 690-794 (YTSQ…DPAF), 795-897 (NPKY…APIF), 898-1007 (ENAP…APAF), 1008-1113 (KSPL…PPTF), and 1114-1220 (ASDK…APVL). Asn671 carries an N-linked (GlcNAc...) asparagine glycan. An N-linked (GlcNAc...) asparagine glycan is attached at Asn886. 3 N-linked (GlcNAc...) asparagine glycosylation sites follow: Asn1269, Asn1374, and Asn1441. The EGF-like 1; calcium-binding domain maps to 1482 to 1518 (EVDLCYSDPCQNGGTCVRREGGYTCVCPSTHTGQNCE). 3 disulfides stabilise this stretch: Cys1486–Cys1497, Cys1491–Cys1506, and Cys1508–Cys1517. The Laminin G-like 1 domain maps to 1556 to 1753 (LRARAFGRNS…VADNGTLAGC (198 aa)). 3 N-linked (GlcNAc...) asparagine glycosylation sites follow: Asn1650, Asn1678, and Asn1747. Intrachain disulfides connect Cys1727-Cys1753, Cys1760-Cys1771, Cys1765-Cys1780, and Cys1782-Cys1791. Residues 1756–1792 (KAPLCQSEPCFNGGTCREGWGTYSCECPEGYAGNSCQ) enclose the EGF-like 2; calcium-binding domain. One can recognise a Laminin G-like 2 domain in the interval 1796–1963 (PAPWRFSGDG…TIRENVEDGC (168 aa)). Asn1843 is a glycosylation site (N-linked (GlcNAc...) asparagine). Intrachain disulfides connect Cys1937–Cys1963, Cys1969–Cys1979, Cys1973–Cys1988, and Cys1990–Cys1999. In terms of domain architecture, EGF-like 3; calcium-binding spans 1965–2000 (SRAQCPDHCPNHSSCQSSWDLSTCECDSGYVGTDCA). An N-linked (GlcNAc...) asparagine glycan is attached at Asn1975. 4 N-linked (GlcNAc...) asparagine glycosylation sites follow: Asn2016, Asn2028, Asn2071, and Asn2088. Disulfide bonds link Cys2092/Cys2095, Cys2097/Cys2114, Cys2116/Cys2125, and Cys2128/Cys2140. Residues 2095–2142 (CDCYSIGSFSGACNPLTGQCECREGVIGRRCDSCSNPYAEVTLSGCEV) enclose the Laminin EGF-like domain. Residues Asn2196 and Asn2320 are each glycosylated (N-linked (GlcNAc...) asparagine). Basic and acidic residues predominate over residues 2553-2562 (QETQRLEIPS). 3 disordered regions span residues 2553-2582 (QETQ…STEQ), 2610-2635 (HEIP…EREP), and 2654-2684 (VISP…GENE). A compositionally biased stretch (low complexity) spans 2567–2579 (SSSSPSSSSSSGS). A GAIN-B domain is found at 2653–2803 (EVISPDSPEM…AVIVDVIDPE (151 aa)). 2 disulfides stabilise this stretch: Cys2747–Cys2785 and Cys2762–Cys2787. The segment at 2747–2803 (CVRWNSFTNQWTRLGCQTEIPDFDGDFNPAAQQAILVNCSCTHISSYAVIVDVIDPE) is GPS. Asn2784 carries N-linked (GlcNAc...) asparagine glycosylation. Residues 2817–2837 (YSAFLVSLPLLLGVLLALALL) form a helical membrane-spanning segment. Residues 2838–2845 (RGQQTNSN) are Cytoplasmic-facing. A helical transmembrane segment spans residues 2846 to 2866 (TIHQNIVLCVFCAELLFFVGM). Over 2867–2883 (QSRRQLLESEFPCKLTA) the chain is Extracellular. Residues 2884 to 2904 (ICLHYFWLAAFAWTTVDCVHL) traverse the membrane as a helical segment. The Cytoplasmic segment spans residues 2905-2919 (YRMLTEMRDINHGPM). The helical transmembrane segment at 2920 to 2940 (GFYFAMGYGAPAIVVGLSVGV) threads the bilayer. Topologically, residues 2941 to 2959 (RAHEYGNSLFCWLSVYEPV) are extracellular. Residues 2960 to 2980 (VWWLVGPIAGMSVVNLLILFV) form a helical membrane-spanning segment. At 2981–3000 (SVKAAFTLKDHVLGFGNLRT) the chain is on the cytoplasmic side. The chain crosses the membrane as a helical span at residues 3001 to 3021 (LLWLSVVSLPLMGVMWVLAVL). The Extracellular segment spans residues 3022 to 3031 (AASEHSQLLS). A helical transmembrane segment spans residues 3032 to 3052 (LLLSGVVLLHALFCLIGYCII). The Cytoplasmic segment spans residues 3053–3579 (NKRVRENLQR…RNIDDDETTV (527 aa)). Disordered stretches follow at residues 3111–3225 (GISA…TPAY), 3343–3377 (LYGR…SGSQ), 3458–3486 (YHQQ…YHFP), and 3499–3579 (LSHT…ETTV). Positions 3113 to 3128 (SASSTTSRSTAKTSSS) are enriched in low complexity. A compositionally biased stretch (basic and acidic residues) spans 3167–3191 (RGGEEKPSRRQRKDSDSGSETDGRS). A phosphoserine mark is found at Ser3199 and Ser3200. Polar residues predominate over residues 3208–3223 (ARSSGTHRSTAVSSTP). Over residues 3343–3352 (LYGRRGEYPD) the composition is skewed to basic and acidic residues. The span at 3459-3468 (HQQQQQQQQH) shows a compositional bias: low complexity. The segment covering 3469–3482 (HLQDRLSEGSDKNG) has biased composition (basic and acidic residues). The span at 3501–3513 (HTQPPSLHGSQLM) shows a compositional bias: polar residues.

It belongs to the G-protein coupled receptor 2 family. As to quaternary structure, interacts with ATP6AP2 (via N-terminus). In the pupal wing, expressed at relatively even levels in all regions. Abundant in 6-9 hours embryos. Expressed at higher levels in pupae than larvae.

It is found in the cell membrane. The protein resides in the apical cell membrane. Involved in the fz signaling pathway that controls wing tissue polarity. Also mediates homophilic cell adhesion. May play a role in initiating prehair morphogenesis. May play a critical role in tissue polarity and in formation of normal dendrite fields. During planar cell polarity, stabilizes asymmetric PCP domains together with ATP6AP2. The chain is Protocadherin-like wing polarity protein stan (stan) from Drosophila melanogaster (Fruit fly).